Consider the following 145-residue polypeptide: D-aminoacyl-tRNA deacylase (145 aa).

The Gly-cisPro motif, important for rejection of L-amino acids signature appears at G137–P138.

This sequence belongs to the DTD family. As to quaternary structure, homodimer.

The protein resides in the cytoplasm. It carries out the reaction glycyl-tRNA(Ala) + H2O = tRNA(Ala) + glycine + H(+). The catalysed reaction is a D-aminoacyl-tRNA + H2O = a tRNA + a D-alpha-amino acid + H(+). In terms of biological role, an aminoacyl-tRNA editing enzyme that deacylates mischarged D-aminoacyl-tRNAs. Also deacylates mischarged glycyl-tRNA(Ala), protecting cells against glycine mischarging by AlaRS. Acts via tRNA-based rather than protein-based catalysis; rejects L-amino acids rather than detecting D-amino acids in the active site. By recycling D-aminoacyl-tRNA to D-amino acids and free tRNA molecules, this enzyme counteracts the toxicity associated with the formation of D-aminoacyl-tRNA entities in vivo and helps enforce protein L-homochirality. The sequence is that of D-aminoacyl-tRNA deacylase from Colwellia psychrerythraea (strain 34H / ATCC BAA-681) (Vibrio psychroerythus).